The chain runs to 367 residues: 2-aminoethylphosphonate--pyruvate transaminase (367 aa).

At K194 the chain carries N6-(pyridoxal phosphate)lysine.

Belongs to the class-V pyridoxal-phosphate-dependent aminotransferase family. PhnW subfamily. Homodimer. Pyridoxal 5'-phosphate serves as cofactor.

The enzyme catalyses (2-aminoethyl)phosphonate + pyruvate = phosphonoacetaldehyde + L-alanine. Its function is as follows. Involved in phosphonate degradation. The protein is 2-aminoethylphosphonate--pyruvate transaminase of Salmonella schwarzengrund (strain CVM19633).